The sequence spans 755 residues: E3 ubiquitin-protein ligase TRIM56 (755 aa).

Residues 21–60 form an RING-type zinc finger; it reads CKICLEQLRAPKTLPCLHTYCQDCLAQLADGGRVRCPECR. 2 B box-type zinc fingers span residues 98-149 and 164-205; these read KPAC…VVDL and RQAA…CLPL. 4 residues coordinate Zn(2+): C169, H172, C192, and H197. Residues 216–314 adopt a coiled-coil conformation; that stretch reads LEGLLAGVDN…AAAFARRVLS (99 aa). The segment at 371–484 is disordered; that stretch reads EEQQPQKDGG…SPALGPNLDG (114 aa). Basic and acidic residues predominate over residues 392–404; the sequence is SQSRREDEPKTER. A phosphothreonine mark is found at T418 and T442. Residues 419–447 are compositionally biased toward basic and acidic residues; the sequence is PKEEKAQTTREEGAQTLEEDRAQTPHEDG. Positions 453–469 are enriched in basic residues; that stretch reads RGGRPNKKKKFKGRLKS. S475 is subject to Phosphoserine.

This sequence belongs to the TRIM/RBCC family. In terms of assembly, homooligomer. Interacts with STING1. Interacts with TICAM1. (Microbial infection) Preferentially ubiquitinated with 'Lys-48' and 'Lys-11'-linked ubiquitin chains by Salmonella effector SopA leading to proteasomal targeting and degradation. In terms of processing, autoubiquitinated. In terms of tissue distribution, widely expressed (at protein level).

It is found in the cytoplasm. It carries out the reaction S-ubiquitinyl-[E2 ubiquitin-conjugating enzyme]-L-cysteine + [acceptor protein]-L-lysine = [E2 ubiquitin-conjugating enzyme]-L-cysteine + N(6)-ubiquitinyl-[acceptor protein]-L-lysine.. Its pathway is protein modification; protein ubiquitination. E3 ubiquitin-protein ligase that plays a key role in innate antiviral immunity by mediating ubiquitination of CGAS and STING1. In response to pathogen- and host-derived double-stranded DNA (dsDNA), targets STING1 to 'Lys-63'-linked ubiquitination, thereby promoting its homodimerization, a step required for the production of type I interferon IFN-beta. Also mediate monoubiquitination of CGAS, thereby promoting CGAS oligomerization and subsequent activation. Promotes also TNFalpha-induced NF-kappa-B signaling by mediating 'Lys-63'-linked ubiquitination TAK1, leading to enhanced interaction between TAK1 and CHUK/IKKalpha. Independently of its E3 ubiquitin ligase activity, positive regulator of TLR3 signaling. Potentiates extracellular double stranded RNA (dsRNA)-induced expression of IFNB1 and interferon-stimulated genes ISG15, IFIT1/ISG56, CXCL10, OASL and CCL5/RANTES. Promotes establishment of an antiviral state by TLR3 ligand and TLR3-mediated chemokine induction following infection by hepatitis C virus. Acts as a restriction factor of Zika virus through direct interaction with the viral RNA via its C-terminal region. This Homo sapiens (Human) protein is E3 ubiquitin-protein ligase TRIM56.